Consider the following 218-residue polypeptide: Small ribosomal subunit protein uS3c (218 aa).

The region spanning I43–A118 is the KH type-2 domain.

The protein belongs to the universal ribosomal protein uS3 family. As to quaternary structure, part of the 30S ribosomal subunit.

The protein localises to the plastid. The protein resides in the chloroplast. The protein is Small ribosomal subunit protein uS3c (rps3) of Buxus microphylla (Littleleaf boxwood).